The following is a 251-amino-acid chain: Diphthine synthase (251 aa).

S-adenosyl-L-methionine-binding positions include L9, D85, V88, 113–114 (SI), L165, A202, and H227.

This sequence belongs to the diphthine synthase family. As to quaternary structure, homodimer.

The catalysed reaction is 2-[(3S)-amino-3-carboxypropyl]-L-histidyl-[translation elongation factor 2] + 3 S-adenosyl-L-methionine = diphthine-[translation elongation factor 2] + 3 S-adenosyl-L-homocysteine + 3 H(+). It participates in protein modification; peptidyl-diphthamide biosynthesis. S-adenosyl-L-methionine-dependent methyltransferase that catalyzes the trimethylation of the amino group of the modified target histidine residue in translation elongation factor 2 (EF-2), to form an intermediate called diphthine. The three successive methylation reactions represent the second step of diphthamide biosynthesis. This is Diphthine synthase from Methanosphaerula palustris (strain ATCC BAA-1556 / DSM 19958 / E1-9c).